A 105-amino-acid chain; its full sequence is uncharacterized protein (105 aa).

Positions 58-105 are disordered; that stretch reads YRKKKPNHSRDNPRINSNLSTNYAQAKSVERSRSNSLNSGPNPLENAT. Composition is skewed to polar residues over residues 71–82 and 91–105; these read RINSNLSTNYAQ and SNSLNSGPNPLENAT.

It localises to the mitochondrion. This is an uncharacterized protein from Arabidopsis thaliana (Mouse-ear cress).